The chain runs to 80 residues: UPF0181 protein SG1330 (80 aa).

The segment at 58–80 is disordered; that stretch reads TEVLETPAARAETDPYDSNPDDD.

This sequence belongs to the UPF0181 family.

The polypeptide is UPF0181 protein SG1330 (Sodalis glossinidius (strain morsitans)).